Here is a 133-residue protein sequence, read N- to C-terminus: Putative HTH-type transcriptional regulator YwnA (133 aa).

An HTH rrf2-type domain is found at 1-130 (MINSRLAVAI…ASKSLKDVMN (130 aa)). The segment at residues 24-47 (SEIIADSVNTNPVVVRRMISLLKK) is a DNA-binding region (H-T-H motif).

This chain is Putative HTH-type transcriptional regulator YwnA (ywnA), found in Bacillus subtilis (strain 168).